A 314-amino-acid polypeptide reads, in one-letter code: uncharacterized protein (314 aa).

Residues 1 to 26 (MRGRVAGSCAPLGLLLVCLRLPGLFA) form the signal peptide. Positions 41 to 60 (GTNLPQLGQPSLTGPPNSEH) are enriched in polar residues. Disordered regions lie at residues 41–65 (GTNL…QPAL), 77–96 (LKLS…SAVQ), 147–191 (GSGP…GKIL), and 292–314 (PPGS…LQWG). Residues 147–157 (GSGPLPGESSP) show a composition bias toward low complexity. Residues 167 to 177 (SHLHQDSESRR) show a composition bias toward basic and acidic residues. The span at 303–314 (FPNPPSPGLQWG) shows a compositional bias: pro residues.

As to quaternary structure, binds to numerous extracellular matrix proteins. In terms of tissue distribution, taste cell specific.

The protein localises to the secreted. It localises to the extracellular space. Its subcellular location is the extracellular matrix. This is an uncharacterized protein from Macaca mulatta (Rhesus macaque).